Here is a 354-residue protein sequence, read N- to C-terminus: NADH-quinone oxidoreductase subunit H (354 aa).

Transmembrane regions (helical) follow at residues 22 to 42 (ILIR…YLIL), 91 to 111 (YLIA…VIPF), 124 to 144 (LLYV…AGWA), 168 to 188 (MGFA…SAIV), 203 to 223 (ILSW…ISGV), 255 to 275 (LFFL…ALMF), 291 to 311 (IPGF…FIWI), and 326 to 346 (LGWK…AIWI).

Belongs to the complex I subunit 1 family. NDH-1 is composed of 14 different subunits. Subunits NuoA, H, J, K, L, M, N constitute the membrane sector of the complex.

The protein localises to the cell inner membrane. It carries out the reaction a quinone + NADH + 5 H(+)(in) = a quinol + NAD(+) + 4 H(+)(out). Its function is as follows. NDH-1 shuttles electrons from NADH, via FMN and iron-sulfur (Fe-S) centers, to quinones in the respiratory chain. The immediate electron acceptor for the enzyme in this species is believed to be ubiquinone. Couples the redox reaction to proton translocation (for every two electrons transferred, four hydrogen ions are translocated across the cytoplasmic membrane), and thus conserves the redox energy in a proton gradient. This subunit may bind ubiquinone. This is NADH-quinone oxidoreductase subunit H from Cupriavidus necator (strain ATCC 17699 / DSM 428 / KCTC 22496 / NCIMB 10442 / H16 / Stanier 337) (Ralstonia eutropha).